The primary structure comprises 430 residues: Corticosteroid-binding globulin (430 aa).

An N-terminal signal peptide occupies residues 1–22; that stretch reads MLLTLYTCLLWLSTSGLWTIQA. N-linked (GlcNAc...) asparagine glycans are attached at residues asparagine 119, asparagine 175, and asparagine 243. Glutamine 253 contributes to the cortisol binding site. Asparagine 259 is a glycosylation site (N-linked (GlcNAc...) asparagine). Cortisol is bound at residue glutamine 285. The N-linked (GlcNAc...) asparagine glycan is linked to asparagine 326. Tryptophan 392 contributes to the cortisol binding site.

This sequence belongs to the serpin family. As to expression, expressed by the liver; secreted in plasma.

It is found in the secreted. In terms of biological role, major transport protein for glucocorticoids and progestins in the blood of almost all vertebrate species. The protein is Corticosteroid-binding globulin (SERPINA6) of Ovis aries (Sheep).